The primary structure comprises 358 residues: uncharacterized protein (358 aa).

Over residues 70 to 88 the composition is skewed to low complexity; that stretch reads RPAATAGTTPATGASGSAR. A disordered region spans residues 70-93; the sequence is RPAATAGTTPATGASGSARPTDAA. The region spanning 178–353 is the Macro domain; sequence PSTCRGDNVS…AFSAAIQAGE (176 aa).

This is an uncharacterized protein from Mycobacterium bovis (strain ATCC BAA-935 / AF2122/97).